The following is a 371-amino-acid chain: Chaperone protein DnaJ (371 aa).

Residues 5–69 enclose the J domain; it reads EFYDRLGVSK…QKRAAYDQYG (65 aa). Residues 127 to 209 form a CR-type zinc finger; sequence GAEKEVSYNR…CHGTGHEKKT (83 aa). Zn(2+) is bound by residues Cys-140, Cys-143, Cys-157, Cys-160, Cys-183, Cys-186, Cys-197, and Cys-200. CXXCXGXG motif repeat units follow at residues 140–147, 157–164, 183–190, and 197–204; these read CHTCSGSG, CQKCHGSG, CDVCQGSG, and CPTCHGTG.

Belongs to the DnaJ family. As to quaternary structure, homodimer. It depends on Zn(2+) as a cofactor.

The protein resides in the cytoplasm. Its function is as follows. Participates actively in the response to hyperosmotic and heat shock by preventing the aggregation of stress-denatured proteins and by disaggregating proteins, also in an autonomous, DnaK-independent fashion. Unfolded proteins bind initially to DnaJ; upon interaction with the DnaJ-bound protein, DnaK hydrolyzes its bound ATP, resulting in the formation of a stable complex. GrpE releases ADP from DnaK; ATP binding to DnaK triggers the release of the substrate protein, thus completing the reaction cycle. Several rounds of ATP-dependent interactions between DnaJ, DnaK and GrpE are required for fully efficient folding. Also involved, together with DnaK and GrpE, in the DNA replication of plasmids through activation of initiation proteins. This Streptococcus agalactiae serotype Ia (strain ATCC 27591 / A909 / CDC SS700) protein is Chaperone protein DnaJ.